Consider the following 1206-residue polypeptide: DNA-directed RNA polymerase subunit beta' (1206 aa).

Zn(2+) contacts are provided by Cys-60, Cys-62, Cys-75, and Cys-78. Mg(2+) contacts are provided by Asp-449, Asp-451, and Asp-453. Residues Cys-822, Cys-896, Cys-903, and Cys-906 each contribute to the Zn(2+) site.

This sequence belongs to the RNA polymerase beta' chain family. As to quaternary structure, the RNAP catalytic core consists of 2 alpha, 1 beta, 1 beta' and 1 omega subunit. When a sigma factor is associated with the core the holoenzyme is formed, which can initiate transcription. Mg(2+) is required as a cofactor. The cofactor is Zn(2+).

It carries out the reaction RNA(n) + a ribonucleoside 5'-triphosphate = RNA(n+1) + diphosphate. Functionally, DNA-dependent RNA polymerase catalyzes the transcription of DNA into RNA using the four ribonucleoside triphosphates as substrates. In Staphylococcus haemolyticus (strain JCSC1435), this protein is DNA-directed RNA polymerase subunit beta'.